The chain runs to 212 residues: Pyrrolidone-carboxylate peptidase (212 aa).

Active-site residues include glutamate 80, cysteine 143, and histidine 165.

The protein belongs to the peptidase C15 family. As to quaternary structure, homotetramer.

It is found in the cytoplasm. The catalysed reaction is Release of an N-terminal pyroglutamyl group from a polypeptide, the second amino acid generally not being Pro.. Functionally, removes 5-oxoproline from various penultimate amino acid residues except L-proline. The sequence is that of Pyrrolidone-carboxylate peptidase from Vibrio vulnificus (strain YJ016).